A 463-amino-acid chain; its full sequence is Phosphoglucosamine mutase (463 aa).

Ser-108 acts as the Phosphoserine intermediate in catalysis. Mg(2+) contacts are provided by Ser-108, Asp-247, Asp-249, and Asp-251. Position 108 is a phosphoserine (Ser-108).

The protein belongs to the phosphohexose mutase family. Mg(2+) is required as a cofactor. Activated by phosphorylation.

It carries out the reaction alpha-D-glucosamine 1-phosphate = D-glucosamine 6-phosphate. Functionally, catalyzes the conversion of glucosamine-6-phosphate to glucosamine-1-phosphate. The chain is Phosphoglucosamine mutase from Nitrosospira multiformis (strain ATCC 25196 / NCIMB 11849 / C 71).